Reading from the N-terminus, the 490-residue chain is MAAANLLSRALLPALNPNPSSHSNRVSPSAVSLRCRHGLTASVRASLSTAAPSPPPRPAAAAADGRAPKRCFRRGADGHLYCEGVRVEDAMGAAERTPFYLYSKPQVVRNFTAYRDALEGLRSIVGYAVKANNNLRVLQLLRELGCGAVLVSGNELRLALRAGFDPTRCIFNGNGKTLEDLVLAAESGVFVNIDSEFDLENIVTAARVAGKKVPVLLRINPDVDPQVHPYVATGNKTSKFGIRNEKLQWFLDSIKSYSNDITLVGVHCHLGSTITKVDIFRDAAGLMVNYVDEIRAQGFELEYLNIGGGLGIDYHHTDAVLPTPMDLINTVRELVLSRDLTLIIEPGRSLIANTCCFVNRVTGVKSNGTKNFIVVDGSMAELIRPSLYGAYQHIELVSPSPDAEVATFDIVGPVCESADFLGKDRELPTPDKGAGLVVHDAGAYCMSMASTYNLKLRPPEYWVEDDGSIAKIRRGESFDDYMKFFDNLSA.

Residues Met-1–Arg-44 constitute a chloroplast transit peptide. The interval Ala-45–Arg-66 is disordered. Lys-130 is modified (N6-(pyridoxal phosphate)lysine). Residues Gly-309 and Glu-345 to Arg-348 each bind pyridoxal 5'-phosphate. Arg-348, Arg-384, and Tyr-388 together coordinate substrate. Cys-415 acts as the Proton donor in catalysis. Substrate-binding residues include Glu-416 and Tyr-444. Tyr-444 contacts pyridoxal 5'-phosphate.

It belongs to the Orn/Lys/Arg decarboxylase class-II family. LysA subfamily. In terms of assembly, homodimer. Pyridoxal 5'-phosphate is required as a cofactor.

It is found in the plastid. Its subcellular location is the chloroplast. The enzyme catalyses meso-2,6-diaminopimelate + H(+) = L-lysine + CO2. The protein operates within amino-acid biosynthesis; L-lysine biosynthesis via DAP pathway; L-lysine from DL-2,6-diaminopimelate: step 1/1. Functionally, specifically catalyzes the decarboxylation of meso-diaminopimelate (meso-DAP) to L-lysine. This chain is Probable diaminopimelate decarboxylase, chloroplastic (LYSA), found in Oryza sativa subsp. japonica (Rice).